Here is a 30-residue protein sequence, read N- to C-terminus: Conopeptide Vi002 (30 aa).

As to expression, expressed by the venom gland.

Its subcellular location is the secreted. The protein is Conopeptide Vi002 of Conus virgo (Virgin cone).